Consider the following 1024-residue polypeptide: Beta-galactosidase (1024 aa).

2 residues coordinate substrate: N103 and D202. D202 contributes to the Na(+) binding site. Residues E417, H419, and E462 each coordinate Mg(2+). Substrate contacts are provided by residues E462 and 538-541; that span reads EYAH. The Proton donor role is filled by E462. E538 functions as the Nucleophile in the catalytic mechanism. Residue N598 coordinates Mg(2+). Residues F602 and N605 each coordinate Na(+). 2 residues coordinate substrate: N605 and W1000.

This sequence belongs to the glycosyl hydrolase 2 family. Homotetramer. It depends on Mg(2+) as a cofactor. Na(+) serves as cofactor.

The catalysed reaction is Hydrolysis of terminal non-reducing beta-D-galactose residues in beta-D-galactosides.. The protein is Beta-galactosidase of Escherichia coli O139:H28 (strain E24377A / ETEC).